The following is a 212-amino-acid chain: 2-C-methyl-D-erythritol 4-phosphate cytidylyltransferase (212 aa).

It belongs to the IspD/TarI cytidylyltransferase family. IspD subfamily.

It carries out the reaction 2-C-methyl-D-erythritol 4-phosphate + CTP + H(+) = 4-CDP-2-C-methyl-D-erythritol + diphosphate. It participates in isoprenoid biosynthesis; isopentenyl diphosphate biosynthesis via DXP pathway; isopentenyl diphosphate from 1-deoxy-D-xylulose 5-phosphate: step 2/6. Its function is as follows. Catalyzes the formation of 4-diphosphocytidyl-2-C-methyl-D-erythritol from CTP and 2-C-methyl-D-erythritol 4-phosphate (MEP). This is 2-C-methyl-D-erythritol 4-phosphate cytidylyltransferase from Chlamydia caviae (strain ATCC VR-813 / DSM 19441 / 03DC25 / GPIC) (Chlamydophila caviae).